We begin with the raw amino-acid sequence, 266 residues long: uncharacterized protein (266 aa).

Positions 1–22 (MGYLKRLVLYIVIMVMSVFIIG) are cleaved as a signal peptide. The N-palmitoyl cysteine moiety is linked to residue C23. C23 is lipidated: S-diacylglycerol cysteine.

The protein belongs to the staphylococcal tandem lipoprotein family.

The protein resides in the cell membrane. This is an uncharacterized protein from Staphylococcus aureus (strain USA300).